Here is a 354-residue protein sequence, read N- to C-terminus: Lysophosphatidic acid receptor 3 (354 aa).

At M1–V31 the chain is on the extracellular side. A glycan (N-linked (GlcNAc...) asparagine) is linked at N15. The chain crosses the membrane as a helical span at residues I32–I52. Over A53–Y67 the chain is Cytoplasmic. Residues L68 to F88 form a helical membrane-spanning segment. The Extracellular portion of the chain corresponds to N89–R101. Residues W102–A124 form a helical membrane-spanning segment. Topologically, residues V125 to T146 are cytoplasmic. Residues L147–W167 form a helical membrane-spanning segment. At N168–S186 the chain is on the extracellular side. A glycan (N-linked (GlcNAc...) asparagine) is linked at N172. Residues Y187–V207 form a helical membrane-spanning segment. Over R208–T240 the chain is Cytoplasmic. Residues V241–L261 form a helical membrane-spanning segment. The Extracellular portion of the chain corresponds to D262 to R276. A helical transmembrane segment spans residues W277 to Y295. Residues K296–S354 are Cytoplasmic-facing. Residue C309 is the site of S-palmitoyl cysteine attachment. The segment at S315–S354 is disordered. Over residues R323–S354 the composition is skewed to polar residues.

This sequence belongs to the G-protein coupled receptor 1 family. As to expression, most abundantly expressed in testes, kidney, and lung, with moderate levels in small intestine, and low levels in heart, stomach, spleen, and adult and perinatal brain. Little or no expression in embryonic brain, liver, or thymus.

It localises to the cell membrane. Functionally, receptor for lysophosphatidic acid (LPA), a mediator of diverse cellular activities. Seems to be coupled to the G(i)/G(o) and G(q) families of heteromeric G proteins. The sequence is that of Lysophosphatidic acid receptor 3 (Lpar3) from Mus musculus (Mouse).